We begin with the raw amino-acid sequence, 314 residues long: Melanoma-associated antigen 6 (314 aa).

Over residues 1-20 (MPLEQRSQHCKPEEGLEARG) the composition is skewed to basic and acidic residues. Residues 1–99 (MPLEQRSQHC…QEEEGPSTFP (99 aa)) form a disordered region. Positions 21-44 (EALGLVGAQAPATEEQEAASSSST) are enriched in low complexity. The segment covering 65-87 (PQGASSLPTTMNYPLWSQSYEDS) has biased composition (polar residues). The 200-residue stretch at 109-308 (LSRKVAKLVH…ISYPLLHEWA (200 aa)) folds into the MAGE domain.

In terms of assembly, interacts with TRIM28. In terms of processing, ubiquitinated by the DCX(DCAF12) complex specifically recognizes the diglutamate (Glu-Glu) at the C-terminus, leading to its degradation. Expressed in many tumors of several types, such as melanoma, head and neck squamous cell carcinoma, lung carcinoma and breast carcinoma, but not in normal tissues except for testes.

Activator of ubiquitin ligase activity of RING-type zinc finger-containing E3 ubiquitin-protein ligases that acts as a repressor of autophagy. May enhance ubiquitin ligase activity of TRIM28 and stimulate p53/TP53 ubiquitination by TRIM28. Proposed to act through recruitment and/or stabilization of the Ubl-conjugating enzyme (E2) at the E3:substrate complex. May play a role in tumor transformation or aspects of tumor progression. In vitro promotes cell viability in melanoma cell lines. This Homo sapiens (Human) protein is Melanoma-associated antigen 6.